The chain runs to 422 residues: Dihydroorotase (422 aa).

The Zn(2+) site is built by H61 and H63. Residues 63 to 65 (HLR) and N95 contribute to the substrate site. Residue D153 participates in Zn(2+) binding. N278 is a substrate binding site. Zn(2+) is bound at residue D305. D305 is an active-site residue. Residues H309 and 322-323 (PG) each bind substrate.

It belongs to the metallo-dependent hydrolases superfamily. DHOase family. Class I DHOase subfamily. In terms of assembly, monomer. Forms a 1:1 stoichiometric complex with PyrB. The complex exists as an equilibrium mixture of heterohexamers, composed of 3 PyrC and 3 PyrB subunits, and dodecamers. The complex has both DHOase and ATCase activities. It depends on Zn(2+) as a cofactor.

The catalysed reaction is (S)-dihydroorotate + H2O = N-carbamoyl-L-aspartate + H(+). Its pathway is pyrimidine metabolism; UMP biosynthesis via de novo pathway; (S)-dihydroorotate from bicarbonate: step 3/3. With respect to regulation, the monomer has very low activity by itself. Activated several thousandfold by formation of a complex with PyrB aspartate carbamoyltransferase (ATCase). In terms of biological role, catalyzes the reversible cyclization of carbamoyl aspartate to dihydroorotate. In Aquifex aeolicus (strain VF5), this protein is Dihydroorotase.